The primary structure comprises 500 residues: Na(+)/H(+) antiporter NhaB (500 aa).

11 consecutive transmembrane segments (helical) span residues 13–33, 34–54, 62–82, 97–117, 129–149, 242–262, 306–326, 350–370, 392–412, 449–469, and 477–497; these read FLGA…IINP, IAVV…EFIF, CYPL…GLTS, ILLL…LLFI, IVIS…LDAL, FLYV…TVVI, GIVA…VGLV, FEEA…VSVI, PIMF…VFVA, VATP…IAPL, and MVWM…LCVT.

It belongs to the NhaB Na(+)/H(+) (TC 2.A.34) antiporter family.

The protein resides in the cell inner membrane. It carries out the reaction 2 Na(+)(in) + 3 H(+)(out) = 2 Na(+)(out) + 3 H(+)(in). Its function is as follows. Na(+)/H(+) antiporter that extrudes sodium in exchange for external protons. In Marinomonas sp. (strain MWYL1), this protein is Na(+)/H(+) antiporter NhaB.